The chain runs to 147 residues: MLMPKRVKWRKQQRGRMKGKATRGNFVAYGDFGIMALEPGWITSNQIEAARVAIARHIKRGGKVWIKIFPDKPVTRKPAETRMGSGKGSPEYWVAVVKPGRVMFEVGGVDEEVAKEALRLAIHKLPIKCKIVSREEAKVGGEANEGV.

This sequence belongs to the universal ribosomal protein uL16 family. As to quaternary structure, part of the 50S ribosomal subunit.

Binds 23S rRNA and is also seen to make contacts with the A and possibly P site tRNAs. The protein is Large ribosomal subunit protein uL16 of Caldicellulosiruptor bescii (strain ATCC BAA-1888 / DSM 6725 / KCTC 15123 / Z-1320) (Anaerocellum thermophilum).